Consider the following 151-residue polypeptide: 3-dehydroquinate dehydratase (151 aa).

The active-site Proton acceptor is Tyr24. Asn76, His82, and Asp89 together coordinate substrate. Residue His102 is the Proton donor of the active site. Residues 103–104 (LS) and Arg113 contribute to the substrate site.

It belongs to the type-II 3-dehydroquinase family. Homododecamer.

It catalyses the reaction 3-dehydroquinate = 3-dehydroshikimate + H2O. Its pathway is metabolic intermediate biosynthesis; chorismate biosynthesis; chorismate from D-erythrose 4-phosphate and phosphoenolpyruvate: step 3/7. In terms of biological role, catalyzes a trans-dehydration via an enolate intermediate. In Acinetobacter baumannii (strain AB307-0294), this protein is 3-dehydroquinate dehydratase.